The following is a 225-amino-acid chain: Transcription factor HES-7 (225 aa).

The 58-residue stretch at 12 to 69 (GPKMLKPLVEKRRRDRINRSLEELRLLLLERTRDQNLRNPKLEKAEILEFAVGYLRER) folds into the bHLH domain. Residues 92-122 (YLSGFRECLLRLAAFAHDASPAARAQLFSAL) form the Orange domain. The tract at residues 125–225 (YLRPKPPRPK…PPPAFWRPWP (101 aa)) is disordered. Over residues 147–158 (LDPAAPALGPAL) the composition is skewed to low complexity. A compositionally biased stretch (pro residues) spans 212–225 (APLPPPPAFWRPWP). Positions 221-224 (WRPW) match the WRPW motif motif.

As to quaternary structure, transcription repression requires formation of a complex with a corepressor protein of the Groucho/TLE family.

It is found in the nucleus. Transcriptional repressor. Represses transcription from both N box- and E box-containing promoters. May with HES1, cooperatively regulate somite formation in the presomitic mesoderm (PSM). May function as a segmentation clock, which is essential for coordinated somite segmentation. The sequence is that of Transcription factor HES-7 (HES7) from Homo sapiens (Human).